Reading from the N-terminus, the 349-residue chain is Putative transport protein YhhT (349 aa).

At 1–10 (METPQPDKTG) the chain is on the cytoplasmic side. The chain crosses the membrane as a helical span at residues 11–31 (MHILLKLASLVVILAGIHAAA). Residue Asp32 is a topological domain, periplasmic. Residues 33-53 (IIVQLLLALFFAIVLNPLVTW) traverse the membrane as a helical segment. Topologically, residues 54–62 (FIRRGVQRP) are cytoplasmic. The helical transmembrane segment at 63–83 (VAITIVVVVMLIALTALVGVL) threads the bilayer. At 84–142 (AASFNEFISMLPKFNKELTRKLFKLQEMLPFLNLHMSPERMLQRMDSEKVVTFTTALMT) the chain is on the periplasmic side. Residues 143–163 (GLSGAMASVLLLVMTVVFMLF) traverse the membrane as a helical segment. Residues 164–208 (EVRHVPYKMRFALNNPQIHIAGLHRALKGVSHYLALKTLLSLWTG) lie on the Cytoplasmic side of the membrane. A helical transmembrane segment spans residues 209-229 (VIVWLGLELMGVQFALMWAVL). The Periplasmic portion of the chain corresponds to 230 to 234 (AFLLN). Residues 235–255 (YVPNIGAVISAVPPMIQVLLF) form a helical membrane-spanning segment. The Cytoplasmic portion of the chain corresponds to 256–257 (NG). A helical transmembrane segment spans residues 258 to 278 (VYECILVGALFLVVHMVIGNI). Residues 279–292 (LEPRMMGHRLGMST) lie on the Periplasmic side of the membrane. A helical transmembrane segment spans residues 293–313 (MVVFLSLLIWGWLLGPVGMLL). Topologically, residues 314 to 349 (SVPLTSVCKIWMETTKGGSKLAILLGPGRPKSRLPG) are cytoplasmic.

It belongs to the autoinducer-2 exporter (AI-2E) (TC 2.A.86) family.

It localises to the cell inner membrane. This chain is Putative transport protein YhhT (yhhT), found in Escherichia coli O157:H7.